Here is a 337-residue protein sequence, read N- to C-terminus: Glyceraldehyde-3-phosphate dehydrogenase (337 aa).

Residues 11–12 and G111 contribute to the NAD(+) site; that span reads TI. 140–142 serves as a coordination point for D-glyceraldehyde 3-phosphate; sequence SCN. C141 acts as the Nucleophile in catalysis. Residue R169 participates in NAD(+) binding. A disordered region spans residues 177 to 196; the sequence is KKGPINSIVPTTEVPSHHGP. 194–195 is a D-glyceraldehyde 3-phosphate binding site; it reads HG. Q301 provides a ligand contact to NAD(+).

It belongs to the glyceraldehyde-3-phosphate dehydrogenase family. In terms of assembly, homotetramer.

The protein localises to the cytoplasm. The enzyme catalyses D-glyceraldehyde 3-phosphate + phosphate + NADP(+) = (2R)-3-phospho-glyceroyl phosphate + NADPH + H(+). It carries out the reaction D-glyceraldehyde 3-phosphate + phosphate + NAD(+) = (2R)-3-phospho-glyceroyl phosphate + NADH + H(+). Its pathway is carbohydrate degradation; glycolysis; pyruvate from D-glyceraldehyde 3-phosphate: step 1/5. In Methanosphaera stadtmanae (strain ATCC 43021 / DSM 3091 / JCM 11832 / MCB-3), this protein is Glyceraldehyde-3-phosphate dehydrogenase.